The following is a 419-amino-acid chain: MRFVDYVSIEVVAGKGGDGIISFRREAHVDKGGPDGGDGGWGGSIYFVGDSGMNTLLPFYQTKKIFGYNGENGRPKRQTGANGKDIFIKVPLGTQVFLKKSLICDIILEKKYLIAKGGRGGLGNFHFRNSKNKAPRISENGELGQNFYLDLQLKVMADIGLVGKPNAGKSTLLSLISNSKPKIANYEFTTLAPQLGVVKIYENSFVTADLPGLIQGASSGKGMGIIFLKHIERCRAIVHVIDFGSDNKNPIKDFIEIKSELEKFNKKLLDLNQIVIANKCDLPNFQFNLANFKRKFPKIKIIKSSLISAKQNEINIIKEKMFGLLGEKQKKLEIQEINTSKIEFNLKAPFLIKSRNNGFFEITGELIQKIIQKIPLNSQENILRFNAKVKKIGLWDELIKKGIKPGDLVRIYEFEFHWN.

The 156-residue stretch at 1–156 folds into the Obg domain; that stretch reads MRFVDYVSIE…FYLDLQLKVM (156 aa). One can recognise an OBG-type G domain in the interval 157–334; the sequence is ADIGLVGKPN…LGEKQKKLEI (178 aa). Residues 163-170, 188-192, 209-212, 278-281, and 315-317 contribute to the GTP site; these read GKPNAGKS, FTTLA, DLPG, NKCD, and NII. Residues S170 and T190 each contribute to the Mg(2+) site. The OCT domain maps to 342–419; it reads IEFNLKAPFL…RIYEFEFHWN (78 aa).

It belongs to the TRAFAC class OBG-HflX-like GTPase superfamily. OBG GTPase family. As to quaternary structure, monomer. The cofactor is Mg(2+).

Its subcellular location is the cytoplasm. In terms of biological role, an essential GTPase which binds GTP, GDP and possibly (p)ppGpp with moderate affinity, with high nucleotide exchange rates and a fairly low GTP hydrolysis rate. Plays a role in control of the cell cycle, stress response, ribosome biogenesis and in those bacteria that undergo differentiation, in morphogenesis control. The sequence is that of GTPase Obg from Mesomycoplasma hyopneumoniae (strain J / ATCC 25934 / NCTC 10110) (Mycoplasma hyopneumoniae).